A 578-amino-acid polypeptide reads, in one-letter code: Proteasome-associated ATPase (578 aa).

Residues 35-84 (RHLTALEEQLGAARTRLAQVSAQNDRLATTLREARDQIVALKAEVDRLGQ) adopt a coiled-coil conformation. Position 266–271 (266–271 (GCGKTL)) interacts with ATP. The tract at residues 577 to 578 (YL) is docks into pockets in the proteasome alpha-ring.

Belongs to the AAA ATPase family. As to quaternary structure, homohexamer. Assembles into a hexameric ring structure that caps the 20S proteasome core. Strongly interacts with the prokaryotic ubiquitin-like protein Pup through a hydrophobic interface; the interacting region of ARC lies in its N-terminal coiled-coil domain. There is one Pup binding site per ARC hexamer ring. Upon ATP-binding, the C-terminus of ARC interacts with the alpha-rings of the proteasome core, possibly by binding to the intersubunit pockets.

The protein operates within protein degradation; proteasomal Pup-dependent pathway. Functionally, ATPase which is responsible for recognizing, binding, unfolding and translocation of pupylated proteins into the bacterial 20S proteasome core particle. May be essential for opening the gate of the 20S proteasome via an interaction with its C-terminus, thereby allowing substrate entry and access to the site of proteolysis. Thus, the C-termini of the proteasomal ATPase may function like a 'key in a lock' to induce gate opening and therefore regulate proteolysis. In Kineococcus radiotolerans (strain ATCC BAA-149 / DSM 14245 / SRS30216), this protein is Proteasome-associated ATPase.